Consider the following 201-residue polypeptide: Transgelin (201 aa).

Ala-2 is modified (N-acetylalanine). The region spanning 24–137 (EELEERLVEW…RTLMALGSLA (114 aa)) is the Calponin-homology (CH) domain. Ser-166 is subject to Phosphoserine. N6-acetyllysine is present on Lys-172. The Calponin-like repeat unit spans residues 175 to 200 (IGLQMGSNRGASQAGMTGYGRPRQII). Position 181 is a phosphoserine (Ser-181). Residue Arg-183 is modified to Omega-N-methylarginine.

It belongs to the calponin family.

The protein localises to the cytoplasm. In terms of biological role, actin cross-linking/gelling protein. This chain is Transgelin (Tagln), found in Mus musculus (Mouse).